The chain runs to 131 residues: Lymphocyte antigen 6C1 (131 aa).

The N-terminal stretch at 1-26 (MDTSHTTKSCVLILLVALLCAERAQG) is a signal peptide. A UPAR/Ly6 domain is found at 27–115 (LQCYECYGVP…PTAGSTWTMA (89 aa)). Disulfide bonds link Cys-29/Cys-53, Cys-32/Cys-41, Cys-46/Cys-74, Cys-78/Cys-95, and Cys-96/Cys-101. Gly-109 carries the GPI-anchor amidated glycine lipid modification. Positions 110 to 131 (STWTMAGVLLFSLSSVVLQTLL) are cleaved as a propeptide — removed in mature form.

Its subcellular location is the cell membrane. This Mus musculus (Mouse) protein is Lymphocyte antigen 6C1 (Ly6c1).